The sequence spans 341 residues: MAVVSEFLKQAWFMENLEQECIKCTQCVHGVPQQTNFDPSADVVALEKAMTAKGVDEATIIDIMTTRTNAQRPRIKAAYHKAKGKSLEEAMKRVLKSHLEDVVVALLKTPAQFDAEELRACMKGHGTDEDTLIEILASRNNKEIREACRYYKEVLKRDLTQDIISDTSGDFQKALVSLAKADRCENPHVNDELAEKDARALYEAGEQKKGTDINVFVTVLTARSYPHSEVFQKYTKYSKHDMNKAVDMEMKGDIEKCLTALVKCATSKPAFFAEKLHMAMKGFGTQHRDLIRIMVSRHEVDMNEIKGYYKKMYGISLCQAIMDELKGGYETILVALCGSDN.

Annexin repeat units lie at residues 37–108, 109–180, 192–263, and 267–338; these read FDPS…ALLK, TPAQ…SLAK, ELAE…ALVK, and SKPA…ALCG.

It belongs to the annexin family. Post-translationally, in contrast to mammalian homologs, does not contain a tyrosine phosphorylation site in the N-terminal part.

The protein resides in the nucleus. It localises to the cytoplasm. The protein localises to the cell projection. Its subcellular location is the cilium. It is found in the basolateral cell membrane. Functionally, calcium/phospholipid-binding protein which promotes membrane fusion and is involved in exocytosis. This protein regulates phospholipase A2 activity. It seems to bind from two to four calcium ions with high affinity. This chain is Annexin A1 isoform p35 (CP35), found in Columba livia (Rock dove).